A 137-amino-acid polypeptide reads, in one-letter code: Large ribosomal subunit protein uL16 (137 aa).

Belongs to the universal ribosomal protein uL16 family. Part of the 50S ribosomal subunit.

Its function is as follows. Binds 23S rRNA and is also seen to make contacts with the A and possibly P site tRNAs. This is Large ribosomal subunit protein uL16 from Sinorhizobium medicae (strain WSM419) (Ensifer medicae).